Here is a 243-residue protein sequence, read N- to C-terminus: Dirigent protein 16 (243 aa).

An N-terminal signal peptide occupies residues 1-24; that stretch reads MMIKQSPFLLLTTILFTVAVFVAA.

The protein belongs to the plant dirigent protein family. In terms of assembly, homodimer.

It is found in the secreted. Its subcellular location is the extracellular space. It localises to the apoplast. Dirigent proteins impart stereoselectivity on the phenoxy radical-coupling reaction, yielding optically active lignans from two molecules of coniferyl alcohol in the biosynthesis of lignans, flavonolignans, and alkaloids and thus plays a central role in plant secondary metabolism. The sequence is that of Dirigent protein 16 (DIR16) from Arabidopsis thaliana (Mouse-ear cress).